The chain runs to 353 residues: Putative glycosyltransferase TagX (353 aa).

The protein belongs to the glycosyltransferase 2 family.

This is Putative glycosyltransferase TagX (tagX) from Staphylococcus aureus (strain MSSA476).